The sequence spans 205 residues: Interleukin-6 (205 aa).

The N-terminal stretch at 1–21 is a signal peptide; the sequence is RFTSAFSLGLLLVTATAFPTP. Cys-64 and Cys-70 are disulfide-bonded. A Phosphoserine modification is found at Ser-73. A disulfide bridge links Cys-93 with Cys-103. Asn-164 carries N-linked (GlcNAc...) asparagine glycosylation.

The protein belongs to the IL-6 superfamily. In terms of assembly, component of a hexamer of two molecules each of IL6, IL6R and IL6ST; first binds to IL6R to associate with the signaling subunit IL6ST. Interacts with IL6R (via the N-terminal ectodomain); this interaction may be affected by IL6R-binding with SORL1, hence decreasing IL6 cis signaling. Interacts with SORL1 (via the N-terminal ectodomain); this interaction leads to IL6 internalization and lysosomal degradation. May form a trimeric complex with the soluble SORL1 ectodomain and soluble IL6R receptor; this interaction might stabilize circulating IL6, hence promoting IL6 trans signaling.

The protein localises to the secreted. Its function is as follows. Cytokine with a wide variety of biological functions in immunity, tissue regeneration, and metabolism. Binds to IL6R, then the complex associates to the signaling subunit IL6ST/gp130 to trigger the intracellular IL6-signaling pathway. The interaction with the membrane-bound IL6R and IL6ST stimulates 'classic signaling', whereas the binding of IL6 and soluble IL6R to IL6ST stimulates 'trans-signaling'. Alternatively, 'cluster signaling' occurs when membrane-bound IL6:IL6R complexes on transmitter cells activate IL6ST receptors on neighboring receiver cells. IL6 is a potent inducer of the acute phase response. Rapid production of IL6 contributes to host defense during infection and tissue injury, but excessive IL6 synthesis is involved in disease pathology. In the innate immune response, is synthesized by myeloid cells, such as macrophages and dendritic cells, upon recognition of pathogens through toll-like receptors (TLRs) at the site of infection or tissue injury. In the adaptive immune response, is required for the differentiation of B cells into immunoglobulin-secreting cells. Plays a major role in the differentiation of CD4(+) T cell subsets. Essential factor for the development of T follicular helper (Tfh) cells that are required for the induction of germinal-center formation. Required to drive naive CD4(+) T cells to the Th17 lineage. Also required for proliferation of myeloma cells and the survival of plasmablast cells. In terms of biological role, acts as an essential factor in bone homeostasis and on vessels directly or indirectly by induction of VEGF, resulting in increased angiogenesis activity and vascular permeability. Induces, through 'trans-signaling' and synergistically with IL1B and TNF, the production of VEGF. Involved in metabolic controls, is discharged into the bloodstream after muscle contraction increasing lipolysis and improving insulin resistance. 'Trans-signaling' in central nervous system also regulates energy and glucose homeostasis. Mediates, through GLP-1, crosstalk between insulin-sensitive tissues, intestinal L cells and pancreatic islets to adapt to changes in insulin demand. Also acts as a myokine. Plays a protective role during liver injury, being required for maintenance of tissue regeneration. Also has a pivotal role in iron metabolism by regulating HAMP/hepcidin expression upon inflammation or bacterial infection. Through activation of IL6ST-YAP-NOTCH pathway, induces inflammation-induced epithelial regeneration. This chain is Interleukin-6 (IL6), found in Orcinus orca (Killer whale).